The chain runs to 110 residues: DNA-directed RNA polymerase subunit omega (110 aa).

It belongs to the RNA polymerase subunit omega family. As to quaternary structure, the RNAP catalytic core consists of 2 alpha, 1 beta, 1 beta' and 1 omega subunit. When a sigma factor is associated with the core the holoenzyme is formed, which can initiate transcription.

The enzyme catalyses RNA(n) + a ribonucleoside 5'-triphosphate = RNA(n+1) + diphosphate. Functionally, promotes RNA polymerase assembly. Latches the N- and C-terminal regions of the beta' subunit thereby facilitating its interaction with the beta and alpha subunits. The sequence is that of DNA-directed RNA polymerase subunit omega (rpoZ) from Mycobacterium bovis (strain ATCC BAA-935 / AF2122/97).